We begin with the raw amino-acid sequence, 351 residues long: Quinolinate phosphoribosyltransferase [decarboxylating] 2, mitochondrial (351 aa).

Residues Arg-142, 173-175 (TRK), Arg-197, Lys-207, Glu-240, Asp-267, 299-301 (SGN), and 320-322 (SGA) each bind substrate.

It belongs to the NadC/ModD family.

The protein resides in the mitochondrion. It catalyses the reaction nicotinate beta-D-ribonucleotide + CO2 + diphosphate = quinolinate + 5-phospho-alpha-D-ribose 1-diphosphate + 2 H(+). The protein operates within alkaloid biosynthesis; nicotine biosynthesis. Its pathway is cofactor biosynthesis; NAD(+) biosynthesis; nicotinate D-ribonucleotide from quinolinate: step 1/1. In terms of biological role, involved in the biosynthesis of pyridine alkaloid natural products, leading mainly to the production of anabasine, anatabine, nicotine and nornicotine, effective deterrents against herbivores with antiparasitic and pesticide properties (neurotoxins); nornicotine serves as the precursor in the synthesis of the carcinogen compound N'-nitrosonornicotine (NNN). Involved in the catabolism of quinolinic acid (QA). In Nicotiana glauca (Glaucous tobacco), this protein is Quinolinate phosphoribosyltransferase [decarboxylating] 2, mitochondrial.